The chain runs to 422 residues: Enolase (422 aa).

Position 162 (glutamine 162) interacts with (2R)-2-phosphoglycerate. Residue glutamate 204 is the Proton donor of the active site. 3 residues coordinate Mg(2+): aspartate 241, glutamate 285, and aspartate 312. (2R)-2-phosphoglycerate is bound by residues lysine 337, arginine 366, serine 367, and lysine 388. Residue lysine 337 is the Proton acceptor of the active site.

It belongs to the enolase family. The cofactor is Mg(2+).

Its subcellular location is the cytoplasm. It is found in the secreted. The protein resides in the cell surface. The enzyme catalyses (2R)-2-phosphoglycerate = phosphoenolpyruvate + H2O. The protein operates within carbohydrate degradation; glycolysis; pyruvate from D-glyceraldehyde 3-phosphate: step 4/5. Its function is as follows. Catalyzes the reversible conversion of 2-phosphoglycerate (2-PG) into phosphoenolpyruvate (PEP). It is essential for the degradation of carbohydrates via glycolysis. The protein is Enolase of Wolinella succinogenes (strain ATCC 29543 / DSM 1740 / CCUG 13145 / JCM 31913 / LMG 7466 / NCTC 11488 / FDC 602W) (Vibrio succinogenes).